Consider the following 228-residue polypeptide: Probable septum site-determining protein MinC (228 aa).

Belongs to the MinC family. As to quaternary structure, interacts with MinD and FtsZ.

Its function is as follows. Cell division inhibitor that blocks the formation of polar Z ring septums. Rapidly oscillates between the poles of the cell to destabilize FtsZ filaments that have formed before they mature into polar Z rings. Prevents FtsZ polymerization. This Bacillus cytotoxicus (strain DSM 22905 / CIP 110041 / 391-98 / NVH 391-98) protein is Probable septum site-determining protein MinC.